The following is a 572-amino-acid chain: NADP-dependent malic enzyme (572 aa).

Residue methionine 1 is modified to N-acetylmethionine. Tyrosine 102 (proton donor) is an active-site residue. Arginine 155 is a binding site for NADP(+). Lysine 173 acts as the Proton acceptor in catalysis. Glutamate 245, aspartate 246, and aspartate 269 together coordinate a divalent metal cation. Residues aspartate 269 and 301-318 (GAGE…MAME) contribute to the NADP(+) site. Serine 336 is subject to Phosphoserine.

The protein belongs to the malic enzymes family. As to quaternary structure, homotetramer. Mg(2+) is required as a cofactor. Requires Mn(2+) as cofactor.

The protein resides in the cytoplasm. The enzyme catalyses (S)-malate + NADP(+) = pyruvate + CO2 + NADPH. It catalyses the reaction oxaloacetate + H(+) = pyruvate + CO2. Functionally, catalyzes the oxidative decarboxylation of (S)-malate in the presence of NADP(+) and divalent metal ions, and decarboxylation of oxaloacetate. This Mus musculus (Mouse) protein is NADP-dependent malic enzyme (Me1).